The sequence spans 294 residues: Beta-glucoside kinase (294 aa).

5–11 is an ATP binding site; it reads AFDIGGT.

Belongs to the ROK (NagC/XylR) family.

The catalysed reaction is D-cellobiose + ATP = 6-phospho-beta-D-glucosyl-(1-&gt;4)-D-glucose + ADP + H(+). In terms of biological role, catalyzes the ATP-dependent phosphorylation of cellobiose to produce cellobiose-6'-P. May have a dual role of kinase and transcriptional regulator of the cellobiose-PTS operon. The polypeptide is Beta-glucoside kinase (bglK) (Listeria innocua serovar 6a (strain ATCC BAA-680 / CLIP 11262)).